The chain runs to 242 residues: ATP synthase subunit a (242 aa).

The next 6 helical transmembrane spans lie at 31 to 51, 84 to 104, 114 to 134, 140 to 160, 189 to 209, and 210 to 230; these read IYMLLASILALTYFYLAFYNW, FIPLFFSLFIFILFCNLLGMT, IIVTFALAILVFLTITIVGFV, FLTLFLPHGTPLWLAPLMIVI, VIASFTISLMIYLKFISIPLM, and VILIGFEIFIAVLQAYIFTIL.

The protein belongs to the ATPase A chain family. As to quaternary structure, F-type ATPases have 2 components, CF(1) - the catalytic core - and CF(0) - the membrane proton channel. CF(1) has five subunits: alpha(3), beta(3), gamma(1), delta(1), epsilon(1). CF(0) has three main subunits: a(1), b(2) and c(9-12). The alpha and beta chains form an alternating ring which encloses part of the gamma chain. CF(1) is attached to CF(0) by a central stalk formed by the gamma and epsilon chains, while a peripheral stalk is formed by the delta and b chains.

The protein localises to the cell inner membrane. In terms of biological role, key component of the proton channel; it plays a direct role in the translocation of protons across the membrane. This Rickettsia canadensis (strain McKiel) protein is ATP synthase subunit a.